Reading from the N-terminus, the 532-residue chain is uncharacterized protein (532 aa).

A run of 5 helical transmembrane segments spans residues 11-31 (YLSH…ALII), 51-71 (IEPF…KIFF), 126-146 (LIDI…YTLW), 147-167 (ILYN…IIVF), and 231-253 (YVES…VLLI). The ABC transporter domain maps to 315–531 (ICINKLVYEY…MIIPMNNGII (217 aa)). Residue 349–356 (GKSGSGKS) coordinates ATP.

Its subcellular location is the membrane. This is an uncharacterized protein from Acanthamoeba polyphaga mimivirus (APMV).